The following is a 417-amino-acid chain: Ribonucleoside-diphosphate reductase small chain (417 aa).

The Fe cation site is built by D168, E199, and H202. Residue Y206 is part of the active site. E261, E297, and H300 together coordinate Fe cation.

The protein belongs to the ribonucleoside diphosphate reductase small chain family. Heterotetramer composed of a homodimer of the large subunit (R1) and a homodimer of the small subunit (R2). Larger multisubunit protein complex are also active, composed of (R1)n(R2)n. It depends on Fe cation as a cofactor.

The enzyme catalyses a 2'-deoxyribonucleoside 5'-diphosphate + [thioredoxin]-disulfide + H2O = a ribonucleoside 5'-diphosphate + [thioredoxin]-dithiol. Functionally, ribonucleoside-diphosphate reductase holoenzyme provides the precursors necessary for viral DNA synthesis. Allows virus growth in non-dividing cells. Catalyzes the biosynthesis of deoxyribonucleotides from the corresponding ribonucleotides. The polypeptide is Ribonucleoside-diphosphate reductase small chain (RNR2) (Acanthamoeba polyphaga mimivirus (APMV)).